A 376-amino-acid chain; its full sequence is Beta-centractin (376 aa).

Methionine 1 bears the N-acetylmethionine mark. Tyrosine 4 is subject to 3'-nitrotyrosine.

It belongs to the actin family. ARP1 subfamily.

The protein localises to the cytoplasm. The protein resides in the cytoskeleton. It is found in the microtubule organizing center. Its subcellular location is the centrosome. Functionally, component of a multi-subunit complex involved in microtubule based vesicle motility. It is associated with the centrosome. This chain is Beta-centractin (ACTR1B), found in Bos taurus (Bovine).